Consider the following 284-residue polypeptide: D-tagatose-1,6-bisphosphate aldolase subunit GatY (284 aa).

The active-site Proton donor is the Asp-82. Residues His-83 and His-180 each coordinate Zn(2+). Cys-181 provides a ligand contact to dihydroxyacetone phosphate. Residue His-208 coordinates Zn(2+). Residues 209–211 (GAS) and 230–233 (NVAT) each bind dihydroxyacetone phosphate.

Belongs to the class II fructose-bisphosphate aldolase family. TagBP aldolase GatY subfamily. As to quaternary structure, forms a complex with GatZ. The cofactor is Zn(2+).

The enzyme catalyses D-tagatofuranose 1,6-bisphosphate = D-glyceraldehyde 3-phosphate + dihydroxyacetone phosphate. It participates in carbohydrate metabolism; D-tagatose 6-phosphate degradation; D-glyceraldehyde 3-phosphate and glycerone phosphate from D-tagatose 6-phosphate: step 2/2. Functionally, catalytic subunit of the tagatose-1,6-bisphosphate aldolase GatYZ, which catalyzes the reversible aldol condensation of dihydroxyacetone phosphate (DHAP or glycerone-phosphate) with glyceraldehyde 3-phosphate (G3P) to produce tagatose 1,6-bisphosphate (TBP). Requires GatZ subunit for full activity and stability. Is involved in the catabolism of galactitol. The sequence is that of D-tagatose-1,6-bisphosphate aldolase subunit GatY from Salmonella paratyphi A (strain ATCC 9150 / SARB42).